A 430-amino-acid chain; its full sequence is Multisubstrate adapter protein soc-1 (430 aa).

The 127-residue stretch at 7–133 (NIILEGSLKR…WVNEICKLCK (127 aa)) folds into the PH domain. Over residues 192–222 (SHNSLPSNPNYNNLPDPLESSRSETSSMYSS) the composition is skewed to low complexity. Disordered regions lie at residues 192–246 (SHNS…TRHT), 275–303 (EDAE…SEGF), and 315–377 (RRAP…RNLD). The segment covering 341–369 (RNLSRNGVNENGNYSATFSSRTSNYQQSE) has biased composition (polar residues).

As to quaternary structure, interacts (via C-terminus) with sem-5 (probably via SH3 domain 2). Interacts with nicotinic acetylcholine receptor. May be phosphorylated.

Adapter protein which modulates signaling mediated by several receptor tyrosine kinases. Plays a role in fluid homeostasis, probably downstream of receptor egl-15 and upstream of let-60/Ras. Involved in nicotinic acetylcholine receptor (nAChR)-mediated sensitivity to nicotine and levamisole and gamma-aminobutyric acid (GABA)receptor-mediated sensitivity to muscimol. Regulates synaptic levels of nAchR receptor subunit lev-1 and unc-38, and GABA receptor subunit unc-49 in the nerve cord, probably downstream of egl-15. Regulates motility. During the formation of neuromuscular junctions at the larval stage, down-regulates membrane protrusion from body wall muscles, probably downstream of egl-15. Promotes vulva induction and down-regulates fertility, probably downstream of receptor let-23. Down-regulates daf-2-mediated repression of dauer formation and positively regulates daf-2-mediated aging. May be involved in the recruitment of phosphatase ptp-2 to egl-15. This Caenorhabditis elegans protein is Multisubstrate adapter protein soc-1.